A 323-amino-acid polypeptide reads, in one-letter code: PI-PLC X domain-containing protein 1 (323 aa).

In terms of domain architecture, PI-PLC X-box spans 30 to 206; it reads RLWDVPLHHL…QVIVSYEDES (177 aa).

In terms of tissue distribution, widely expressed.

Its subcellular location is the cytoplasm. The chain is PI-PLC X domain-containing protein 1 (PLCXD1) from Homo sapiens (Human).